The sequence spans 229 residues: Potassium/proton antiporter CemA (229 aa).

A run of 4 helical transmembrane segments spans residues 7–27, 114–134, 154–174, and 189–209; these read FTPL…SLSL, IICF…LLIL, ILLL…ELMI, and IISG…KYWI.

This sequence belongs to the CemA family.

It localises to the plastid. The protein resides in the chloroplast inner membrane. The enzyme catalyses K(+)(in) + H(+)(out) = K(+)(out) + H(+)(in). Contributes to K(+)/H(+) antiport activity by supporting proton efflux to control proton extrusion and homeostasis in chloroplasts in a light-dependent manner to modulate photosynthesis. Prevents excessive induction of non-photochemical quenching (NPQ) under continuous-light conditions. Indirectly promotes efficient inorganic carbon uptake into chloroplasts. The chain is Potassium/proton antiporter CemA from Vitis vinifera (Grape).